We begin with the raw amino-acid sequence, 416 residues long: MLEQMGIAAKAASYKLALLSSREKNRVLEKIADELESQTETILSANAQDVAQARENGLSDAMLDRLALTPARLKSIADDVRQVCHLTDPVGQVIDGGLLDSGLRLERRRVPLGVIGVIYEARPNVTVDVASLCLKTGNAVILRGGKETHRTNAATVRVIQKALKACGLPEAAVQAIDNPDRSLVNEMLRMDKYIDMLIPRGGAGLHKLCREQSTIPVITGGIGVCHIFVDSSAEIAPALEIIVNAKTQRPSTCNTVETLLVHQDIAERFLPVLSQQMAESDVTLHGDERVMQIMKGPAKRIPLKPEELDNEFLSLDLNVVMVMNIDHAINHIREHGTQHSDAILTCDMHNAARFVNEVDSAAVYVNASTRFTDGGQFGLGAEVAVSTQKLHARGPMGLEALTTYKWIGFGDGTIRA.

The protein belongs to the gamma-glutamyl phosphate reductase family.

The protein localises to the cytoplasm. The enzyme catalyses L-glutamate 5-semialdehyde + phosphate + NADP(+) = L-glutamyl 5-phosphate + NADPH + H(+). Its pathway is amino-acid biosynthesis; L-proline biosynthesis; L-glutamate 5-semialdehyde from L-glutamate: step 2/2. Functionally, catalyzes the NADPH-dependent reduction of L-glutamate 5-phosphate into L-glutamate 5-semialdehyde and phosphate. The product spontaneously undergoes cyclization to form 1-pyrroline-5-carboxylate. This is Gamma-glutamyl phosphate reductase from Salmonella arizonae (strain ATCC BAA-731 / CDC346-86 / RSK2980).